The following is a 334-amino-acid chain: Ornithine carbamoyltransferase, catabolic (334 aa).

Carbamoyl phosphate contacts are provided by residues 57-60, Gln-84, Arg-108, and 135-138; these read STRT and HPTQ. L-ornithine contacts are provided by residues Asn-169, Asp-233, and 237–238; that span reads SM. Carbamoyl phosphate is bound by residues 275-276 and Arg-320; that span reads CL.

This sequence belongs to the aspartate/ornithine carbamoyltransferase superfamily. OTCase family.

The protein localises to the cytoplasm. It carries out the reaction carbamoyl phosphate + L-ornithine = L-citrulline + phosphate + H(+). It functions in the pathway amino-acid degradation; L-arginine degradation via ADI pathway; carbamoyl phosphate from L-arginine: step 2/2. Reversibly catalyzes the transfer of the carbamoyl group from carbamoyl phosphate (CP) to the N(epsilon) atom of ornithine (ORN) to produce L-citrulline. In Salmonella typhimurium (strain LT2 / SGSC1412 / ATCC 700720), this protein is Ornithine carbamoyltransferase, catabolic (arcB).